A 93-amino-acid chain; its full sequence is Putative regulatory protein LA_2599 (93 aa).

The protein belongs to the RemA family.

The sequence is that of Putative regulatory protein LA_2599 from Leptospira interrogans serogroup Icterohaemorrhagiae serovar Lai (strain 56601).